Reading from the N-terminus, the 260-residue chain is Proteasome subunit alpha (260 aa).

A compositionally biased stretch (low complexity) spans 237 to 248 (ASTDAPAAAADS). The tract at residues 237-260 (ASTDAPAAAADSADVEERPDSEAP) is disordered. Residues 251–260 (VEERPDSEAP) are compositionally biased toward basic and acidic residues.

Belongs to the peptidase T1A family. In terms of assembly, the 20S proteasome core is composed of 14 alpha and 14 beta subunits that assemble into four stacked heptameric rings, resulting in a barrel-shaped structure. The two inner rings, each composed of seven catalytic beta subunits, are sandwiched by two outer rings, each composed of seven alpha subunits. The catalytic chamber with the active sites is on the inside of the barrel. Has a gated structure, the ends of the cylinder being occluded by the N-termini of the alpha-subunits. Is capped by the proteasome-associated ATPase, ARC.

Its subcellular location is the cytoplasm. The protein operates within protein degradation; proteasomal Pup-dependent pathway. The formation of the proteasomal ATPase ARC-20S proteasome complex, likely via the docking of the C-termini of ARC into the intersubunit pockets in the alpha-rings, may trigger opening of the gate for substrate entry. Interconversion between the open-gate and close-gate conformations leads to a dynamic regulation of the 20S proteasome proteolysis activity. Component of the proteasome core, a large protease complex with broad specificity involved in protein degradation. The chain is Proteasome subunit alpha from Salinispora tropica (strain ATCC BAA-916 / DSM 44818 / JCM 13857 / NBRC 105044 / CNB-440).